A 730-amino-acid chain; its full sequence is Pentatricopeptide repeat-containing protein At5g64320, mitochondrial (730 aa).

The N-terminal 18 residues, 1–18 (MVMLARSKLALDVSRRSQ), are a transit peptide targeting the mitochondrion. PPR repeat units lie at residues 110-144 (SFDV…GIVF), 145-175 (KESL…MRNV), 181-215 (TFKS…KIPP), 216-250 (TLFT…GCVP), 251-285 (NSVI…GCVP), 286-320 (DAET…GFAP), 321-351 (DDIT…IPKP), 352-387 (EIVI…GIVP), 388-422 (DVCT…GCKP), 423-457 (NVYS…GLKP), 458-492 (NTVG…GCKP), 493-527 (DVYT…GVVA), 528-562 (NTVT…GSPL), 563-597 (DEIT…GHAP), 598-632 (SNIS…GSTP), 633-667 (DIVT…GIPP), and 668-702 (DTVT…GFVP).

This sequence belongs to the PPR family. P subfamily.

The protein localises to the mitochondrion. In Arabidopsis thaliana (Mouse-ear cress), this protein is Pentatricopeptide repeat-containing protein At5g64320, mitochondrial.